The chain runs to 73 residues: Exodeoxyribonuclease 7 small subunit (73 aa).

Belongs to the XseB family. In terms of assembly, heterooligomer composed of large and small subunits.

The protein localises to the cytoplasm. It catalyses the reaction Exonucleolytic cleavage in either 5'- to 3'- or 3'- to 5'-direction to yield nucleoside 5'-phosphates.. Bidirectionally degrades single-stranded DNA into large acid-insoluble oligonucleotides, which are then degraded further into small acid-soluble oligonucleotides. The protein is Exodeoxyribonuclease 7 small subunit of Clostridium novyi (strain NT).